Reading from the N-terminus, the 72-residue chain is Translation initiation factor IF-1 (72 aa).

One can recognise an S1-like domain in the interval 1 to 72 (MSKDDVIEMQ…TRGRITWRAK (72 aa)).

This sequence belongs to the IF-1 family. As to quaternary structure, component of the 30S ribosomal translation pre-initiation complex which assembles on the 30S ribosome in the order IF-2 and IF-3, IF-1 and N-formylmethionyl-tRNA(fMet); mRNA recruitment can occur at any time during PIC assembly.

It localises to the cytoplasm. Functionally, one of the essential components for the initiation of protein synthesis. Stabilizes the binding of IF-2 and IF-3 on the 30S subunit to which N-formylmethionyl-tRNA(fMet) subsequently binds. Helps modulate mRNA selection, yielding the 30S pre-initiation complex (PIC). Upon addition of the 50S ribosomal subunit IF-1, IF-2 and IF-3 are released leaving the mature 70S translation initiation complex. The protein is Translation initiation factor IF-1 of Clostridium kluyveri (strain ATCC 8527 / DSM 555 / NBRC 12016 / NCIMB 10680 / K1).